Consider the following 158-residue polypeptide: Small ribosomal subunit protein uS7 (158 aa).

It belongs to the universal ribosomal protein uS7 family. As to quaternary structure, part of the 30S ribosomal subunit. Contacts proteins S9 and S11.

Functionally, one of the primary rRNA binding proteins, it binds directly to 16S rRNA where it nucleates assembly of the head domain of the 30S subunit. Is located at the subunit interface close to the decoding center, probably blocks exit of the E-site tRNA. The polypeptide is Small ribosomal subunit protein uS7 (Phocaeicola vulgatus (strain ATCC 8482 / DSM 1447 / JCM 5826 / CCUG 4940 / NBRC 14291 / NCTC 11154) (Bacteroides vulgatus)).